A 591-amino-acid chain; its full sequence is Transcriptional regulator PUL4 (591 aa).

A DNA-binding region (zn(2)-C6 fungal-type) is located at residues 3–29 (CLECKKRKQKCDGQKPCRRCTKLNVKC).

It localises to the nucleus. In terms of biological role, transcription factor involved in regulation of the PUL gene cluster that mediates the formation of pulcherrimin, a red iron-containing pigment composed of two cyclized and modified leucine molecules that acts as a siderophore, a chelator that binds iron outside the cell for subsequent uptake. The sequence is that of Transcriptional regulator PUL4 from Kluyveromyces lactis (strain ATCC 8585 / CBS 2359 / DSM 70799 / NBRC 1267 / NRRL Y-1140 / WM37) (Yeast).